The chain runs to 343 residues: Fructose-1,6-bisphosphatase class 1 (343 aa).

Positions 99, 121, 123, and 124 each coordinate Mg(2+). Substrate-binding positions include 124–127 (DGSS), Asn218, Tyr250, and Lys283. Mg(2+) is bound at residue Glu289.

It belongs to the FBPase class 1 family. Homotetramer. Mg(2+) is required as a cofactor.

The protein resides in the cytoplasm. It carries out the reaction beta-D-fructose 1,6-bisphosphate + H2O = beta-D-fructose 6-phosphate + phosphate. Its pathway is carbohydrate biosynthesis; gluconeogenesis. The protein is Fructose-1,6-bisphosphatase class 1 of Leptospira biflexa serovar Patoc (strain Patoc 1 / Ames).